An 88-amino-acid polypeptide reads, in one-letter code: Apolipoprotein C-I (88 aa).

Residues 1–26 (MRLILSLPVLVVVLSMVLEGPAPAQA) form the signal peptide.

It belongs to the apolipoprotein C1 family. As to expression, expressed in the liver.

Its subcellular location is the secreted. Functionally, inhibitor of lipoprotein binding to the low density lipoprotein (LDL) receptor, LDL receptor-related protein, and very low density lipoprotein (VLDL) receptor. Associates with high density lipoproteins (HDL) and the triacylglycerol-rich lipoproteins in the plasma and makes up about 10% of the protein of the VLDL and 2% of that of HDL. Appears to interfere directly with fatty acid uptake and is also the major plasma inhibitor of cholesteryl ester transfer protein (CETP). Binds free fatty acids and reduces their intracellular esterification. Modulates the interaction of APOE with beta-migrating VLDL and inhibits binding of beta-VLDL to the LDL receptor-related protein. The protein is Apolipoprotein C-I (APOC1) of Canis lupus familiaris (Dog).